We begin with the raw amino-acid sequence, 235 residues long: Ribonuclease S-2 (235 aa).

The signal sequence occupies residues 1–31; it reads MATVQKSQHSHFFLLVGCIVHLSNFCSTTTA. Q41 is a binding site for RNA. C47 and C54 are oxidised to a cystine. An RNA-binding site is contributed by H66. H66 (proton donor) is an active-site residue. The N-linked (GlcNAc...) asparagine glycan is linked to N72. Intrachain disulfides connect C80–C129, C189–C217, and C200–C211. RNA is bound by residues 105-106, R108, and F118; that span reads DL. Residue Q122 is part of the active site. 125–126 serves as a coordination point for RNA; the sequence is KH. Catalysis depends on H126, which acts as the Proton acceptor.

Belongs to the RNase T2 family.

The protein localises to the secreted. It is found in the extracellular space. It catalyses the reaction a ribonucleotidyl-ribonucleotide-RNA + H2O = a 3'-end 3'-phospho-ribonucleotide-RNA + a 5'-end dephospho-ribonucleoside-RNA + H(+). Self-incompatibility (SI) is the inherited ability of a flowering plant to prevent self-fertilization by discriminating between self and non-self pollen during pollination. In many species, self-incompatibility is controlled by the single, multiallelic locus S. The protein is Ribonuclease S-2 (S2) of Antirrhinum hispanicum (Snapdragon).